The primary structure comprises 160 residues: Sec-independent protein translocase protein TatB (160 aa).

A helical membrane pass occupies residues 1-21 (MFGMGFFEILVVLVVAIIFLG). Residues 118–160 (HLNEEVSNEEALNKEVSSDESPKEVQLATDNNTKEHDKEKENV) are disordered. Basic and acidic residues-rich tracts occupy residues 128–140 (ALNK…ESPK) and 149–160 (NTKEHDKEKENV).

This sequence belongs to the TatB family. In terms of assembly, the Tat system comprises two distinct complexes: a TatABC complex, containing multiple copies of TatA, TatB and TatC subunits, and a separate TatA complex, containing only TatA subunits. Substrates initially bind to the TatABC complex, which probably triggers association of the separate TatA complex to form the active translocon.

The protein resides in the cell inner membrane. In terms of biological role, part of the twin-arginine translocation (Tat) system that transports large folded proteins containing a characteristic twin-arginine motif in their signal peptide across membranes. Together with TatC, TatB is part of a receptor directly interacting with Tat signal peptides. TatB may form an oligomeric binding site that transiently accommodates folded Tat precursor proteins before their translocation. This is Sec-independent protein translocase protein TatB from Helicobacter pylori (strain ATCC 700392 / 26695) (Campylobacter pylori).